We begin with the raw amino-acid sequence, 287 residues long: ATP synthase gamma chain (287 aa).

It belongs to the ATPase gamma chain family. In terms of assembly, F-type ATPases have 2 components, CF(1) - the catalytic core - and CF(0) - the membrane proton channel. CF(1) has five subunits: alpha(3), beta(3), gamma(1), delta(1), epsilon(1). CF(0) has three main subunits: a, b and c. The F(1)F(0) complex interacts with SpoIIIJ and YqjG; YqgA is found in the same complex. Interacts with FloT.

It is found in the cell membrane. Its subcellular location is the membrane raft. Its function is as follows. Produces ATP from ADP in the presence of a proton gradient across the membrane. The gamma chain is believed to be important in regulating ATPase activity and the flow of protons through the CF(0) complex. In Bacillus subtilis (strain 168), this protein is ATP synthase gamma chain.